Here is a 445-residue protein sequence, read N- to C-terminus: Protein cereblon (445 aa).

The tract at residues 1–48 is disordered; it reads MAGEGDQQDAAHNMGNHLPLLPADSEDEDDEIEMEVEDQDSKEARKPN. Residues 24–38 are compositionally biased toward acidic residues; it reads DSEDEDDEIEMEVED. Residue Ser25 is modified to Phosphoserine. Positions 84–322 constitute a Lon N-terminal domain; sequence IPVLPEVLMI…CELDIMNKCT (239 aa). A CULT domain is found at 321–429; sequence CTSLCCKQCQ…LTRSALLPTI (109 aa). Positions 326 and 329 each coordinate Zn(2+). (S)-thalidomide contacts are provided by His381, Trp383, and Trp389. Cys394 and Cys397 together coordinate Zn(2+).

The protein belongs to the CRBN family. As to quaternary structure, component of a DCX (DDB1-CUL4-X-box) protein ligase complex, at least composed of CRBN, CUL4A, DDB1 and RBX1. Interacts directly with DDB1. Interacts with KCNT1. Interacts with ILF2. Interacts with TRAF6 and ECSIT. In terms of processing, ubiquitinated, ubiquitination is mediated by its own DCX protein ligase complex. In terms of tissue distribution, highly expressed in brain.

Its subcellular location is the cytoplasm. It localises to the nucleus. The protein localises to the membrane. It participates in protein modification; protein ubiquitination. In terms of biological role, substrate recognition component of a DCX (DDB1-CUL4-X-box) E3 protein ligase complex that mediates the ubiquitination and subsequent proteasomal degradation of target proteins, such as MEIS2, ILF2 or GLUL. Normal degradation of key regulatory proteins is required for normal limb outgrowth and expression of the fibroblast growth factor FGF8. Maintains presynaptic glutamate release and consequently, cognitive functions such as memory and learning, by negatively regulating large-conductance calcium-activated potassium (BK) channels in excitatory neurons. Likely to function by regulating the assembly and neuronal surface expression of BK channels via its interaction with KCNT1. May also be involved in regulating anxiety-like behaviors via a BK channel-independent mechanism. Plays a negative role in TLR4 signaling by interacting with TRAF6 and ECSIT, leading to inhibition of ECSIT ubiquitination, an important step of the signaling. In Mus musculus (Mouse), this protein is Protein cereblon (Crbn).